Consider the following 353-residue polypeptide: Protein RecA (353 aa).

67 to 74 provides a ligand contact to ATP; the sequence is GPESSGKT.

Belongs to the RecA family.

The protein localises to the cytoplasm. In terms of biological role, can catalyze the hydrolysis of ATP in the presence of single-stranded DNA, the ATP-dependent uptake of single-stranded DNA by duplex DNA, and the ATP-dependent hybridization of homologous single-stranded DNAs. It interacts with LexA causing its activation and leading to its autocatalytic cleavage. The chain is Protein RecA from Shewanella sediminis (strain HAW-EB3).